A 105-amino-acid polypeptide reads, in one-letter code: Small ribosomal subunit protein eS26 (105 aa).

Belongs to the eukaryotic ribosomal protein eS26 family. Component of the small ribosomal subunit.

It is found in the cytoplasm. In Encephalitozoon cuniculi (strain GB-M1) (Microsporidian parasite), this protein is Small ribosomal subunit protein eS26 (RPS26).